The chain runs to 131 residues: EG45-like domain containing protein (131 aa).

An N-terminal signal peptide occupies residues 1-24; it reads MGVGTKVLVITTMAICLISSAAYA. The region spanning 27–131 is the Expansin-like EG45; incomplete domain; that stretch reads GTATFYTPPY…GKIKIEFNQA (105 aa). Cys-73 and Cys-85 are oxidised to a cystine.

As to expression, expressed in the outer layer of xylem and the vascular cambial zone of roots, in shoot cambium, but not in leaves.

The protein resides in the secreted. Might have a systemic role in water and solute homeostasis. Has no expansin-like activity. This Citrus jambhiri (Rough lemon) protein is EG45-like domain containing protein (CjBAp12).